The chain runs to 160 residues: S-ribosylhomocysteine lyase (160 aa).

3 residues coordinate Fe cation: His-57, His-61, and Cys-127.

It belongs to the LuxS family. As to quaternary structure, homodimer. Fe cation serves as cofactor.

It carries out the reaction S-(5-deoxy-D-ribos-5-yl)-L-homocysteine = (S)-4,5-dihydroxypentane-2,3-dione + L-homocysteine. Its function is as follows. Involved in the synthesis of autoinducer 2 (AI-2) which is secreted by bacteria and is used to communicate both the cell density and the metabolic potential of the environment. The regulation of gene expression in response to changes in cell density is called quorum sensing. Catalyzes the transformation of S-ribosylhomocysteine (RHC) to homocysteine (HC) and 4,5-dihydroxy-2,3-pentadione (DPD). This chain is S-ribosylhomocysteine lyase, found in Streptococcus pyogenes serotype M2 (strain MGAS10270).